We begin with the raw amino-acid sequence, 607 residues long: Polyphenol oxidase, chloroplastic (607 aa).

A chloroplast-targeting transit peptide spans 1 to 103; sequence MASLPWSLTT…LGATKPLAFG (103 aa). The disordered stretch occupies residues 39 to 73; it reads RNRSRRFAPSKVSCNSANGDPNSDSTSDVRETSSG. The segment covering 50–64 has biased composition (polar residues); it reads VSCNSANGDPNSDST. Cystine bridges form between C114–C129 and C128–C191. H190, H211, H220, H342, H346, and H375 together coordinate Cu cation. The 2'-(S-cysteinyl)-histidine (Cys-His) cross-link spans 194–211; sequence CQGAYDQVGYTDLELQVH.

Belongs to the tyrosinase family. It depends on Cu(2+) as a cofactor.

It is found in the plastid. The protein resides in the chloroplast thylakoid lumen. It carries out the reaction 2 catechol + O2 = 2 1,2-benzoquinone + 2 H2O. Functionally, catalyzes the oxidation of mono- and o-diphenols to o-diquinones. The sequence is that of Polyphenol oxidase, chloroplastic from Vitis vinifera (Grape).